The sequence spans 315 residues: Archaeosortase A (315 aa).

The next 7 helical transmembrane spans lie at 12-32 (VIPYTDVLAWVVMAAFIAGVA), 47-67 (AGAWWLFAVFWFVLIQHFAFV), 74-94 (TVLILIAVPACLYVGWLVFAG), 173-193 (VVFECTGIGAMSIFGGLIAAV), 204-224 (IALSISIIWVLNIGRNVFIAL), 227-247 (GYQWFAYSWLEGPIMALFGLT), and 260-280 (VLAQLLAVVALAGLAWFIARW). The active-site Acyl-thioester intermediate is cysteine 177. The active-site Proton donor is arginine 218.

It belongs to the exosortase/archaeosortase family. Archaeosortase A subfamily.

Its subcellular location is the cell membrane. Functionally, transpeptidase that recognizes and modifies its substrate by proteolytic cleavage of a sorting signal. Following cleavage, a covalent intermediate is formed via a thioester bond between the archaeosortase and its substrate, which is then transferred and covalently attached to the cell membrane. This Natronomonas pharaonis (strain ATCC 35678 / DSM 2160 / CIP 103997 / JCM 8858 / NBRC 14720 / NCIMB 2260 / Gabara) (Halobacterium pharaonis) protein is Archaeosortase A.